Consider the following 482-residue polypeptide: ATP synthase subunit beta (482 aa).

Gly162–Thr169 is a binding site for ATP.

Belongs to the ATPase alpha/beta chains family. In terms of assembly, F-type ATPases have 2 components, CF(1) - the catalytic core - and CF(0) - the membrane proton channel. CF(1) has five subunits: alpha(3), beta(3), gamma(1), delta(1), epsilon(1). CF(0) has four main subunits: a(1), b(1), b'(1) and c(9-12).

It is found in the cellular thylakoid membrane. It carries out the reaction ATP + H2O + 4 H(+)(in) = ADP + phosphate + 5 H(+)(out). In terms of biological role, produces ATP from ADP in the presence of a proton gradient across the membrane. The catalytic sites are hosted primarily by the beta subunits. The polypeptide is ATP synthase subunit beta (Nostoc punctiforme (strain ATCC 29133 / PCC 73102)).